A 119-amino-acid chain; its full sequence is MFKKNDRSQSRTRRHMRVRKKIFGTAERPRLSVYRSEKHIYAQLIDDVEGKTLVAASSSEKGFDSVGSNKEGAKLVGKMIAEKALEKGLKKVVFDRGGFIYHGRIKELAEGAREAGLDF.

This sequence belongs to the universal ribosomal protein uL18 family. Part of the 50S ribosomal subunit; part of the 5S rRNA/L5/L18/L25 subcomplex. Contacts the 5S and 23S rRNAs.

Its function is as follows. This is one of the proteins that bind and probably mediate the attachment of the 5S RNA into the large ribosomal subunit, where it forms part of the central protuberance. The protein is Large ribosomal subunit protein uL18 of Clostridium botulinum (strain Langeland / NCTC 10281 / Type F).